The primary structure comprises 473 residues: Uronate isomerase (473 aa).

It belongs to the metallo-dependent hydrolases superfamily. Uronate isomerase family.

It catalyses the reaction D-glucuronate = D-fructuronate. The enzyme catalyses aldehydo-D-galacturonate = keto-D-tagaturonate. Its pathway is carbohydrate metabolism; pentose and glucuronate interconversion. The polypeptide is Uronate isomerase (uxaC) (Bacillus subtilis (strain 168)).